The following is a 286-amino-acid chain: MARQVICWCFTLNNPLSPLSLHDSMKYLVYQTEQGEAGNIHFQGYIEMKKRTSLAGMKKLIPGAHFEKRRGTQGEARAYSMKEDTRLEGPWEYGEFVPTIEDKLREVMNDMKITGKRPIEYIEECCNTYDKSASTLREFRGELKKKKAISSWELQRKPWMGEVDALLQERDGRRIIWVYGPQGGEGKTSYAKHLVKTRDAFYSTGGKTADIAFAWDHQELVLFDFPRSFEEYVNYGVIEQLKNGIIQSGKYQSVIKYSDYVEVIVFANFTPRSGMFSEDRIVYVYA.

A CRESS-DNA virus Rep endonuclease domain is found at alanine 2–phenylalanine 96. An RCR-1 motif is present at residues cysteine 9–leucine 12. Glutamate 33 and histidine 41 together coordinate a divalent metal cation. The short motif at histidine 41–glutamine 43 is the RCR-2 element. Positions lysine 50 to arginine 70 match the Nuclear localization signal motif. Catalysis depends on tyrosine 79, which acts as the For DNA cleavage activity. Residues tyrosine 79–lysine 82 carry the RCR-3 motif. Residue aspartate 84 participates in a divalent metal cation binding. The Nuclear localization signal signature appears at phenylalanine 96 to aspartate 102. ATP is bound at residue glycine 186–threonine 188.

It belongs to the nanoviridea/circoviridae replication-associated protein family. As to quaternary structure, homooligomer (Potential). Rep binds to repeated DNA motifs (iterons). Requires Mg(2+) as cofactor. Mn(2+) serves as cofactor.

The protein localises to the host nucleus. It carries out the reaction ATP + H2O = ADP + phosphate + H(+). Functionally, essential for the replication of all genomic viral ssDNA (trans-replication). The closed circular ssDNA genome is first converted to a superhelical dsDNA. Rep binds a specific hairpin at the genome origin of replication. Introduces an endonucleolytic nick within the conserved sequence 5'-A[GT]TATTAC-3' in the intergenic region of the genome, thereby initiating the rolling circle replication (RCR). Following cleavage, binds covalently to the 5'-phosphate of DNA as a tyrosyl ester. The cleavage gives rise to a free 3'-OH that serves as a primer for the cellular DNA polymerase. The polymerase synthesizes the (+) strand DNA by rolling circle mechanism. After one round of replication, a Rep-catalyzed nucleotidyl transfer reaction releases a circular single-stranded virus genome, thereby terminating the replication. Displays origin-specific DNA cleavage, nucleotidyl transferase, ATPase and helicase activities. This Cicer arietinum (Chickpea) protein is Master replication protein (DNA-R).